We begin with the raw amino-acid sequence, 945 residues long: Isoleucine--tRNA ligase (945 aa).

Residues 66 to 76 carry the 'HIGH' region motif; the sequence is PYANGDIHLGH. Glu-581 is a binding site for L-isoleucyl-5'-AMP. Residues 622-626 carry the 'KMSKS' region motif; that stretch reads KMSKS. Residue Lys-625 coordinates ATP. Residues Cys-908, Cys-911, Cys-928, and Cys-931 each coordinate Zn(2+).

This sequence belongs to the class-I aminoacyl-tRNA synthetase family. IleS type 1 subfamily. As to quaternary structure, monomer. It depends on Zn(2+) as a cofactor.

The protein resides in the cytoplasm. The enzyme catalyses tRNA(Ile) + L-isoleucine + ATP = L-isoleucyl-tRNA(Ile) + AMP + diphosphate. In terms of biological role, catalyzes the attachment of isoleucine to tRNA(Ile). As IleRS can inadvertently accommodate and process structurally similar amino acids such as valine, to avoid such errors it has two additional distinct tRNA(Ile)-dependent editing activities. One activity is designated as 'pretransfer' editing and involves the hydrolysis of activated Val-AMP. The other activity is designated 'posttransfer' editing and involves deacylation of mischarged Val-tRNA(Ile). The polypeptide is Isoleucine--tRNA ligase (Burkholderia vietnamiensis (strain G4 / LMG 22486) (Burkholderia cepacia (strain R1808))).